Here is a 334-residue protein sequence, read N- to C-terminus: Methionyl-tRNA formyltransferase (334 aa).

111-114 provides a ligand contact to (6S)-5,6,7,8-tetrahydrofolate; it reads SILP.

Belongs to the Fmt family.

It catalyses the reaction L-methionyl-tRNA(fMet) + (6R)-10-formyltetrahydrofolate = N-formyl-L-methionyl-tRNA(fMet) + (6S)-5,6,7,8-tetrahydrofolate + H(+). Functionally, attaches a formyl group to the free amino group of methionyl-tRNA(fMet). The formyl group appears to play a dual role in the initiator identity of N-formylmethionyl-tRNA by promoting its recognition by IF2 and preventing the misappropriation of this tRNA by the elongation apparatus. This is Methionyl-tRNA formyltransferase from Trichormus variabilis (strain ATCC 29413 / PCC 7937) (Anabaena variabilis).